A 374-amino-acid polypeptide reads, in one-letter code: tRNA-specific 2-thiouridylase MnmA (374 aa).

ATP is bound by residues 13 to 20 (GMSGGVDS) and Met39. Residues 99–101 (NPD) form an interaction with target base in tRNA region. Cys104 acts as the Nucleophile in catalysis. Cys104 and Cys201 are oxidised to a cystine. Gly128 provides a ligand contact to ATP. Positions 151–153 (KDQ) are interaction with tRNA. Cys201 functions as the Cysteine persulfide intermediate in the catalytic mechanism. Residues 313–314 (RY) form an interaction with tRNA region.

Belongs to the MnmA/TRMU family.

It localises to the cytoplasm. It catalyses the reaction S-sulfanyl-L-cysteinyl-[protein] + uridine(34) in tRNA + AH2 + ATP = 2-thiouridine(34) in tRNA + L-cysteinyl-[protein] + A + AMP + diphosphate + H(+). Functionally, catalyzes the 2-thiolation of uridine at the wobble position (U34) of tRNA, leading to the formation of s(2)U34. The protein is tRNA-specific 2-thiouridylase MnmA of Streptococcus equi subsp. equi (strain 4047).